The following is a 174-amino-acid chain: MSVDKKPRAAHDSHDLSELLVSVRRVSKVVKGGRRFSFSVLVVVGDEKGRVGCGMGKHAEVSEAKIKAVNAAKKSMIRVYLRESRTLHHDVEAKFCASRVVLRSARVGTGIIAGGSVRAVFEVLGVQDVVAKIIGSSNPHSVIYAVFAAFKNMLSPKQVAGKRSRKVGEVIENR.

The S5 DRBM domain occupies 16 to 79; that stretch reads LSELLVSVRR…NAAKKSMIRV (64 aa).

The protein belongs to the universal ribosomal protein uS5 family. As to quaternary structure, part of the 30S ribosomal subunit. Contacts proteins S4 and S8.

Functionally, with S4 and S12 plays an important role in translational accuracy. Located at the back of the 30S subunit body where it stabilizes the conformation of the head with respect to the body. The protein is Small ribosomal subunit protein uS5 of Anaplasma marginale (strain Florida).